Consider the following 257-residue polypeptide: MLAKRLVPCLDVKDGKVVKGVQFRNHEIVGDIVPLAARYAEEGADELVFYDITASAHERVVDKSWVSRVAEQIDIPFCVAGGIKTISQARELLAFGADKISINSPALTDPSLISRLQDEFGRQCIVIGIDSFFDATSNSYKVKQFTGDEAATKDTQWFTQDWVEEVQKRGCGEIVLNVMNQDGVRGGYDIKQLSLVRAICDVPLIASGGAGTMAHFRDVFIEAKVDAALAASVFHKAIINIGELKAYLAAEGIAIRR.

Residues D11 and D130 contribute to the active site.

It belongs to the HisA/HisF family. As to quaternary structure, heterodimer of HisH and HisF.

Its subcellular location is the cytoplasm. It catalyses the reaction 5-[(5-phospho-1-deoxy-D-ribulos-1-ylimino)methylamino]-1-(5-phospho-beta-D-ribosyl)imidazole-4-carboxamide + L-glutamine = D-erythro-1-(imidazol-4-yl)glycerol 3-phosphate + 5-amino-1-(5-phospho-beta-D-ribosyl)imidazole-4-carboxamide + L-glutamate + H(+). The protein operates within amino-acid biosynthesis; L-histidine biosynthesis; L-histidine from 5-phospho-alpha-D-ribose 1-diphosphate: step 5/9. Functionally, IGPS catalyzes the conversion of PRFAR and glutamine to IGP, AICAR and glutamate. The HisF subunit catalyzes the cyclization activity that produces IGP and AICAR from PRFAR using the ammonia provided by the HisH subunit. This Shewanella baltica (strain OS223) protein is Imidazole glycerol phosphate synthase subunit HisF.